The chain runs to 207 residues: Proteasome subunit beta 2 (207 aa).

The propeptide at 1–13 (METNNKLKILKTG) is removed in mature form; by autocatalysis. The Nucleophile role is filled by T14.

The protein belongs to the peptidase T1B family. In terms of assembly, the 20S proteasome core is composed of 14 alpha and 14 beta subunits that assemble into four stacked heptameric rings, resulting in a barrel-shaped structure. The two inner rings, each composed of seven catalytic beta subunits, are sandwiched by two outer rings, each composed of seven alpha subunits. The catalytic chamber with the active sites is on the inside of the barrel. Has a gated structure, the ends of the cylinder being occluded by the N-termini of the alpha-subunits. Is capped at one or both ends by the proteasome regulatory ATPase, PAN.

It is found in the cytoplasm. It carries out the reaction Cleavage of peptide bonds with very broad specificity.. Its activity is regulated as follows. The formation of the proteasomal ATPase PAN-20S proteasome complex, via the docking of the C-termini of PAN into the intersubunit pockets in the alpha-rings, triggers opening of the gate for substrate entry. Interconversion between the open-gate and close-gate conformations leads to a dynamic regulation of the 20S proteasome proteolysis activity. Component of the proteasome core, a large protease complex with broad specificity involved in protein degradation. The protein is Proteasome subunit beta 2 of Sulfurisphaera tokodaii (strain DSM 16993 / JCM 10545 / NBRC 100140 / 7) (Sulfolobus tokodaii).